Consider the following 396-residue polypeptide: ATP-dependent RNA helicase eIF4A (396 aa).

Positions 22–50 (YSFDDLKLKEELLRGIFGYGFVEPSAIQQ) match the Q motif motif. The Helicase ATP-binding domain occupies 53–223 (ILPIIEGKDV…SKFMKDPVRI (171 aa)). An ATP-binding site is contributed by 66–73 (AQSGTGKT). The DEAD box signature appears at 171–174 (DEAD). Positions 234–395 (GIGQYYVNVE…ELPSSISELF (162 aa)) constitute a Helicase C-terminal domain.

This sequence belongs to the DEAD box helicase family. eIF4A subfamily. Component of the eIF4F complex, which composition varies with external and internal environmental conditions. It is composed of at least eIF4A, eIF4E and eIF4G.

It is found in the cytoplasm. It carries out the reaction ATP + H2O = ADP + phosphate + H(+). Its function is as follows. ATP-dependent RNA helicase which is a subunit of the eIF4F complex involved in cap recognition and is required for mRNA binding to ribosome. In the current model of translation initiation, eIF4A unwinds RNA secondary structures in the 5'-UTR of mRNAs which is necessary to allow efficient binding of the small ribosomal subunit, and subsequent scanning for the initiator codon. This Kluyveromyces lactis (strain ATCC 8585 / CBS 2359 / DSM 70799 / NBRC 1267 / NRRL Y-1140 / WM37) (Yeast) protein is ATP-dependent RNA helicase eIF4A (TIF1).